The sequence spans 699 residues: Glycine--tRNA ligase beta subunit (699 aa).

Belongs to the class-II aminoacyl-tRNA synthetase family. Tetramer of two alpha and two beta subunits.

The protein localises to the cytoplasm. The enzyme catalyses tRNA(Gly) + glycine + ATP = glycyl-tRNA(Gly) + AMP + diphosphate. In Methylobacterium radiotolerans (strain ATCC 27329 / DSM 1819 / JCM 2831 / NBRC 15690 / NCIMB 10815 / 0-1), this protein is Glycine--tRNA ligase beta subunit.